The primary structure comprises 427 residues: Inorganic pyrophosphatase 1 (427 aa).

Residues 36–52 show a composition bias toward low complexity; the sequence is SSSSNTATTSTSSSNTS. 2 disordered regions span residues 36–63 and 77–118; these read SSSS…TSRP and SMDS…RSLH. Composition is skewed to polar residues over residues 53–63 and 77–114; these read QKWATSRTSRP and SMDS…ANSE. Positions 259, 264, and 296 each coordinate Mg(2+).

It belongs to the PPase family. It depends on Mg(2+) as a cofactor. Expressed in coelomocytes, the intestine and in the nervous system including the nerve cords and sensory neurons.

It localises to the cytoplasm. It catalyses the reaction diphosphate + H2O = 2 phosphate + H(+). Catalyzes the hydrolysis of inorganic pyrophosphate (PPi) forming two phosphate ions. Plays a role in intestinal development and subsequent normal secretory, digestive and absorption functions. Required for larval development. This is Inorganic pyrophosphatase 1 from Caenorhabditis elegans.